The sequence spans 273 residues: Tryptase-2 (273 aa).

The first 18 residues, 1–18 (MLHLLALALLLSLVSAAP), serve as a signal peptide directing secretion. Positions 19 to 28 (APGQALQRSG) are cleaved as a propeptide — activation peptide. A Peptidase S1 domain is found at 29–270 (IIGGKEAPGS…YLDWIHQYVP (242 aa)). An intrachain disulfide couples C57 to C73. Residues H72 and D119 each act as charge relay system in the active site. 3 disulfides stabilise this stretch: C153–C228, C186–C209, and C218–C246. Residue S222 is the Charge relay system of the active site. N-linked (GlcNAc...) asparagine glycosylation is present at N231.

It belongs to the peptidase S1 family. Tryptase subfamily. As to quaternary structure, homotetramer.

The protein resides in the secreted. The enzyme catalyses Preferential cleavage: Arg-|-Xaa, Lys-|-Xaa, but with more restricted specificity than trypsin.. Tryptase is the major neutral protease present in mast cells and is secreted upon the coupled activation-degranulation response of this cell type. This Ovis aries (Sheep) protein is Tryptase-2.